The chain runs to 468 residues: ATP synthase subunit beta (468 aa).

148–155 is an ATP binding site; the sequence is GGAGVGKT.

Belongs to the ATPase alpha/beta chains family. F-type ATPases have 2 components, CF(1) - the catalytic core - and CF(0) - the membrane proton channel. CF(1) has five subunits: alpha(3), beta(3), gamma(1), delta(1), epsilon(1). CF(0) has three main subunits: a(1), b(2) and c(9-12). The alpha and beta chains form an alternating ring which encloses part of the gamma chain. CF(1) is attached to CF(0) by a central stalk formed by the gamma and epsilon chains, while a peripheral stalk is formed by the delta and b chains.

It localises to the cell inner membrane. It catalyses the reaction ATP + H2O + 4 H(+)(in) = ADP + phosphate + 5 H(+)(out). Produces ATP from ADP in the presence of a proton gradient across the membrane. The catalytic sites are hosted primarily by the beta subunits. The sequence is that of ATP synthase subunit beta from Xanthomonas campestris pv. campestris (strain 8004).